A 409-amino-acid polypeptide reads, in one-letter code: TAR DNA-binding protein 43 (409 aa).

RRM domains lie at 105 to 200 and 191 to 262; these read SDLI…RCTE and RKVF…TAEP. 2 disordered regions span residues 260–302 and 341–409; these read AEPK…NQGG and SQQN…GWGM. Positions 261 to 274 are enriched in basic and acidic residues; sequence EPKHNNNRQLERGG. Residues 281 to 292 are compositionally biased toward polar residues; the sequence is FGNQGYPNSRPS. 2 stretches are compositionally biased toward low complexity: residues 341–387 and 395–409; these read SQQN…PNAG and GFSS…GWGM.

In terms of assembly, homodimer.

The protein localises to the nucleus. Its subcellular location is the cytoplasm. It localises to the stress granule. The protein resides in the mitochondrion. Probably involved in transcriptional repression. May play a role in the maintenance of the circadian clock periodicity. This is TAR DNA-binding protein 43 (tardbp) from Xenopus tropicalis (Western clawed frog).